A 218-amino-acid chain; its full sequence is Adenylate kinase (218 aa).

10–15 (GAGKGT) lines the ATP pocket. An NMP region spans residues 30 to 59 (STGNMLRAAVKAGTPLGLEAKKVMDAGGLV). AMP-binding positions include threonine 31, arginine 36, 57 to 59 (GLV), 85 to 88 (GFPR), and glutamine 92. The LID stretch occupies residues 122-159 (GRRVHPASGRSYHVRFNPPKAEGVDDVTGEPLVQRDDD). ATP contacts are provided by residues arginine 123 and 132-133 (SY). 2 residues coordinate AMP: arginine 156 and arginine 167. Residue glycine 203 coordinates ATP.

Belongs to the adenylate kinase family. In terms of assembly, monomer.

The protein resides in the cytoplasm. The enzyme catalyses AMP + ATP = 2 ADP. Its pathway is purine metabolism; AMP biosynthesis via salvage pathway; AMP from ADP: step 1/1. Catalyzes the reversible transfer of the terminal phosphate group between ATP and AMP. Plays an important role in cellular energy homeostasis and in adenine nucleotide metabolism. This Bordetella parapertussis (strain 12822 / ATCC BAA-587 / NCTC 13253) protein is Adenylate kinase.